The sequence spans 215 residues: MAVFGYEMDEHRASSSRRRRSLYHNLGGGRFADIMFWKNKKESGTILGVFTLIWFLFEVVEYPFITFLCQILLLFIFIFLIWSYIGSSQLIQSKPPSINDLRISESNWRFLFNKINWFIIKLYDISSGKDFRLLFLAVVSLWILSVVGNYFSSLTLLYIVFVGLETIPMLYEQYEEELTYAASKSGRDMKKLLNKFNSKVINKIPKAQAKTRRTM.

The Reticulon domain maps to 31–211 (FADIMFWKNK…NKIPKAQAKT (181 aa)). 3 helical membrane passes run 41–61 (KESGTILGVFTLIWFLFEVVE), 62–82 (YPFITFLCQILLLFIFIFLIW), and 141–161 (LWILSVVGNYFSSLTLLYIVF).

Its subcellular location is the endoplasmic reticulum membrane. This is Reticulon-like protein B14 (RTNLB14) from Arabidopsis thaliana (Mouse-ear cress).